We begin with the raw amino-acid sequence, 125 residues long: MRPLDAVELAEPEEVEVLEPEEDFEQFLLPVIHEMREDIASLTRERGRAPVRNRGKLWEMDNMLIQIKTQVEASEESALNHLQGAGGAEPRGPRAEKADEKAQEMAKMAEMLVQLVRRIEKSESS.

A disordered region spans residues 76–99 (ESALNHLQGAGGAEPRGPRAEKAD). Positions 94–124 (RAEKADEKAQEMAKMAEMLVQLVRRIEKSES) form a coiled coil.

The protein belongs to the MORF4 family-associated protein family. Found in a complex composed of MORF4L1, MRFAP1 and RB1. Interacts via its N-terminus with MORF4L1. Interacts with CSTB and MORF4L2.

It is found in the nucleus. The protein localises to the cytoplasm. It localises to the perinuclear region. This Rattus norvegicus (Rat) protein is MORF4 family-associated protein 1.